A 173-amino-acid polypeptide reads, in one-letter code: Probable transcription termination protein NusA (173 aa).

Residues 31 to 97 (DEKIVFVVKE…EDVWVKKFGN (67 aa)) form the KH domain. Over residues 147–162 (ADNRPKKDEIPEKAAE) the composition is skewed to basic and acidic residues. The segment at 147 to 173 (ADNRPKKDEIPEKAAESSENVQAEENQ) is disordered. Over residues 163-173 (SSENVQAEENQ) the composition is skewed to polar residues.

Belongs to the NusA family.

It is found in the cytoplasm. Participates in transcription termination. The polypeptide is Probable transcription termination protein NusA (Methanococcus vannielii (strain ATCC 35089 / DSM 1224 / JCM 13029 / OCM 148 / SB)).